The primary structure comprises 583 residues: Threonine--tRNA ligase (583 aa).

The interval 185 to 478 (DHRKLGRELN…LVEHYGGAFP (294 aa)) is catalytic. Zn(2+)-binding residues include C278, H329, and H455.

This sequence belongs to the class-II aminoacyl-tRNA synthetase family. As to quaternary structure, homodimer. Zn(2+) is required as a cofactor.

It is found in the cytoplasm. It carries out the reaction tRNA(Thr) + L-threonine + ATP = L-threonyl-tRNA(Thr) + AMP + diphosphate + H(+). Functionally, catalyzes the attachment of threonine to tRNA(Thr) in a two-step reaction: L-threonine is first activated by ATP to form Thr-AMP and then transferred to the acceptor end of tRNA(Thr). Also edits incorrectly charged L-seryl-tRNA(Thr). In Borrelia recurrentis (strain A1), this protein is Threonine--tRNA ligase.